Here is a 264-residue protein sequence, read N- to C-terminus: uncharacterized protein (264 aa).

In terms of domain architecture, ABC transporter spans 3-243 (LQLDNVSLKR…QILSAFFDTP (241 aa)). Residue 35-42 (GLNGAGKT) coordinates ATP.

It belongs to the ABC transporter superfamily.

This is an uncharacterized protein from Bacillus subtilis (strain 168).